The sequence spans 256 residues: DNA repair protein RecO (256 aa).

Belongs to the RecO family.

Functionally, involved in DNA repair and RecF pathway recombination. In Bartonella henselae (strain ATCC 49882 / DSM 28221 / CCUG 30454 / Houston 1) (Rochalimaea henselae), this protein is DNA repair protein RecO.